The following is a 301-amino-acid chain: XIAP-associated factor 1 (301 aa).

The TRAF-type zinc-finger motif lies at 22 to 99; that stretch reads LHEAYCLRFL…KLDMQLSKLE (78 aa). A disordered region spans residues 189 to 257; sequence ILPSSLPSQA…KPRTSSPRGD (69 aa). Positions 193-205 are enriched in polar residues; that stretch reads SLPSQAAENQTST.

Interacts with BIRC4; the interaction is not detected in. Interacts with BIRC1, BIRC2, BIRC3, BIRC7 and BIRC8. Part of an complex consisting of BIRC4, XAF1 and BIRC5; the complex formation requires IFN-beta stimulation. Interacts with RNF114, the interaction increases XAF1 stability and proapoptotic effects, and may regulate IFN signaling. As to expression, widely expressed. Expression is frequently down-regulated in cancer cell lines. Isoform 5 is widely expressed. Expressed in placenta (at protein level).

The protein localises to the cytoplasm. It localises to the nucleus. Its subcellular location is the mitochondrion. Its function is as follows. Seems to function as a negative regulator of members of the IAP (inhibitor of apoptosis protein) family. Inhibits anti-caspase activity of BIRC4. Induces cleavage and inactivation of BIRC4 independent of caspase activation. Mediates TNF-alpha-induced apoptosis and is involved in apoptosis in trophoblast cells. May inhibit BIRC4 indirectly by activating the mitochondrial apoptosis pathway. After translocation to mitochondria, promotes translocation of BAX to mitochondria and cytochrome c release from mitochondria. Seems to promote the redistribution of BIRC4 from the cytoplasm to the nucleus, probably independent of BIRC4 inactivation which seems to occur in the cytoplasm. The BIRC4-XAF1 complex mediates down-regulation of BIRC5/survivin; the process requires the E3 ligase activity of BIRC4. Seems to be involved in cellular sensitivity to the proapoptotic actions of TRAIL. May be a tumor suppressor by mediating apoptosis resistance of cancer cells. The sequence is that of XIAP-associated factor 1 (XAF1) from Homo sapiens (Human).